A 190-amino-acid polypeptide reads, in one-letter code: Elongation factor P-like protein (190 aa).

Belongs to the elongation factor P family.

This chain is Elongation factor P-like protein, found in Psychromonas ingrahamii (strain DSM 17664 / CCUG 51855 / 37).